The chain runs to 423 residues: Histidine--tRNA ligase (423 aa).

Belongs to the class-II aminoacyl-tRNA synthetase family. As to quaternary structure, homodimer.

It is found in the cytoplasm. The catalysed reaction is tRNA(His) + L-histidine + ATP = L-histidyl-tRNA(His) + AMP + diphosphate + H(+). The chain is Histidine--tRNA ligase from Rhodococcus jostii (strain RHA1).